Here is a 74-residue protein sequence, read N- to C-terminus: Large ribosomal subunit protein eL38B (74 aa).

The protein belongs to the eukaryotic ribosomal protein eL38 family. Component of the large ribosomal subunit (LSU). Mature yeast ribosomes consist of a small (40S) and a large (60S) subunit. The 40S small subunit contains 1 molecule of ribosomal RNA (18S rRNA) and at least 33 different proteins. The large 60S subunit contains 3 rRNA molecules (25S, 5.8S and 5S rRNA) and at least 46 different proteins.

It is found in the cytoplasm. Functionally, component of the ribosome, a large ribonucleoprotein complex responsible for the synthesis of proteins in the cell. The small ribosomal subunit (SSU) binds messenger RNAs (mRNAs) and translates the encoded message by selecting cognate aminoacyl-transfer RNA (tRNA) molecules. The large subunit (LSU) contains the ribosomal catalytic site termed the peptidyl transferase center (PTC), which catalyzes the formation of peptide bonds, thereby polymerizing the amino acids delivered by tRNAs into a polypeptide chain. The nascent polypeptides leave the ribosome through a tunnel in the LSU and interact with protein factors that function in enzymatic processing, targeting, and the membrane insertion of nascent chains at the exit of the ribosomal tunnel. The protein is Large ribosomal subunit protein eL38B (rpl3802) of Schizosaccharomyces pombe (strain 972 / ATCC 24843) (Fission yeast).